Here is a 229-residue protein sequence, read N- to C-terminus: Enolase-phosphatase E1 (229 aa).

The segment at 206 to 229 (DRDPASHHPQVQRFDDIHPEQIPA) is disordered. A compositionally biased stretch (basic and acidic residues) spans 218–229 (RFDDIHPEQIPA).

It belongs to the HAD-like hydrolase superfamily. MasA/MtnC family. As to quaternary structure, monomer. Requires Mg(2+) as cofactor.

The catalysed reaction is 5-methylsulfanyl-2,3-dioxopentyl phosphate + H2O = 1,2-dihydroxy-5-(methylsulfanyl)pent-1-en-3-one + phosphate. It functions in the pathway amino-acid biosynthesis; L-methionine biosynthesis via salvage pathway; L-methionine from S-methyl-5-thio-alpha-D-ribose 1-phosphate: step 3/6. It participates in amino-acid biosynthesis; L-methionine biosynthesis via salvage pathway; L-methionine from S-methyl-5-thio-alpha-D-ribose 1-phosphate: step 4/6. In terms of biological role, bifunctional enzyme that catalyzes the enolization of 2,3-diketo-5-methylthiopentyl-1-phosphate (DK-MTP-1-P) into the intermediate 2-hydroxy-3-keto-5-methylthiopentenyl-1-phosphate (HK-MTPenyl-1-P), which is then dephosphorylated to form the acireductone 1,2-dihydroxy-3-keto-5-methylthiopentene (DHK-MTPene). This Klebsiella oxytoca protein is Enolase-phosphatase E1.